A 120-amino-acid polypeptide reads, in one-letter code: Fumarate reductase subunit D (120 aa).

A run of 3 helical transmembrane segments spans residues 25 to 45, 55 to 75, and 100 to 120; these read FAMLTPVTILVLGILVPLGVI, VAGFVTSIIGALFVIGSISMP, and IACYATAALATVLSIVFIFMI.

It belongs to the FrdD family. As to quaternary structure, part of an enzyme complex containing four subunits: a flavoprotein (FrdA), an iron-sulfur protein (FrdB), and two hydrophobic anchor proteins (FrdC and FrdD).

The protein resides in the cell inner membrane. Anchors the catalytic components of the fumarate reductase complex to the cell membrane, binds quinones. The protein is Fumarate reductase subunit D of Aliivibrio salmonicida (strain LFI1238) (Vibrio salmonicida (strain LFI1238)).